A 411-amino-acid polypeptide reads, in one-letter code: Stearoyl-[acyl-carrier-protein] 9-desaturase 2, chloroplastic (411 aa).

Residues 1-44 constitute a chloroplast transit peptide; the sequence is MALLLNSTITVAMKQNPLVAVSFPRTTCLGSSFSPPRLLRVSCV. Glutamate 148, glutamate 186, histidine 189, glutamate 239, glutamate 272, and histidine 275 together coordinate Fe cation.

This sequence belongs to the fatty acid desaturase type 2 family. Homodimer. Fe(2+) is required as a cofactor. Preferentially expressed in roots and flowers.

It localises to the plastid. Its subcellular location is the chloroplast. It carries out the reaction octadecanoyl-[ACP] + 2 reduced [2Fe-2S]-[ferredoxin] + O2 + 2 H(+) = (9Z)-octadecenoyl-[ACP] + 2 oxidized [2Fe-2S]-[ferredoxin] + 2 H2O. It participates in lipid metabolism; fatty acid metabolism. Functionally, converts stearoyl-ACP to oleoyl-ACP by introduction of a cis double bond between carbons 9 and 10 of the acyl chain. Exhibits delta-9 palmitoyl-[acyl-carrier-protein] desaturase (PAD) activity. Involved in omega-7 monounsaturated fatty acid biosynthesis, especially in the endosperm oil. This is Stearoyl-[acyl-carrier-protein] 9-desaturase 2, chloroplastic (S-ACP-DES2) from Arabidopsis thaliana (Mouse-ear cress).